A 123-amino-acid polypeptide reads, in one-letter code: Probable histone H2B 4 (123 aa).

Residues 1–30 (MPPKPSAKGAKKAAKTVVAKPKDGKKRRHA) are disordered. A glycan (O-linked (GlcNAc) serine) is linked at S110. K118 is covalently cross-linked (Glycyl lysine isopeptide (Lys-Gly) (interchain with G-Cter in ubiquitin)).

It belongs to the histone H2B family. In terms of assembly, the nucleosome is a histone octamer containing two molecules each of H2A, H2B, H3 and H4 assembled in one H3-H4 heterotetramer and two H2A-H2B heterodimers. The octamer wraps approximately 147 bp of DNA. Post-translationally, monoubiquitination of Lys-118 gives a specific tag for epigenetic transcriptional activation and is also prerequisite for histone H3 'Lys-4' and 'Lys-79' methylation. In terms of processing, glcNAcylation at Ser-110 promotes monoubiquitination of Lys-118. It fluctuates in response to extracellular glucose, and associates with transcribed genes.

Its subcellular location is the nucleus. It is found in the chromosome. Functionally, core component of nucleosome. Nucleosomes wrap and compact DNA into chromatin, limiting DNA accessibility to the cellular machineries which require DNA as a template. Histones thereby play a central role in transcription regulation, DNA repair, DNA replication and chromosomal stability. DNA accessibility is regulated via a complex set of post-translational modifications of histones, also called histone code, and nucleosome remodeling. The polypeptide is Probable histone H2B 4 (his-48) (Caenorhabditis elegans).